The following is a 315-amino-acid chain: Ribosomal RNA small subunit methyltransferase H (315 aa).

Residues 37-39 (AGH), D57, Y84, D105, and Q112 contribute to the S-adenosyl-L-methionine site.

This sequence belongs to the methyltransferase superfamily. RsmH family.

Its subcellular location is the cytoplasm. It carries out the reaction cytidine(1402) in 16S rRNA + S-adenosyl-L-methionine = N(4)-methylcytidine(1402) in 16S rRNA + S-adenosyl-L-homocysteine + H(+). Specifically methylates the N4 position of cytidine in position 1402 (C1402) of 16S rRNA. This is Ribosomal RNA small subunit methyltransferase H from Lachnospira eligens (strain ATCC 27750 / DSM 3376 / VPI C15-48 / C15-B4) (Eubacterium eligens).